We begin with the raw amino-acid sequence, 139 residues long: Class I hydrophobin 1 (139 aa).

The first 21 residues, 1 to 21 (MFFRISTVFVVALAAFAAASP), serve as a signal peptide directing secretion. 4 disulfide bridges follow: Cys57/Cys118, Cys64/Cys112, Cys65/Cys98, and Cys119/Cys132.

It belongs to the fungal hydrophobin family. In terms of assembly, self-assembles to form functional amyloid fibrils called rodlets. Self-assembly into fibrillar rodlets occurs spontaneously at hydrophobic:hydrophilic interfaces and the rodlets further associate laterally to form amphipathic monolayers.

It localises to the secreted. Its subcellular location is the cell wall. In terms of biological role, aerial growth, conidiation, and dispersal of filamentous fungi in the environment rely upon a capability of their secreting small amphipathic proteins called hydrophobins (HPBs) with low sequence identity. Class I can self-assemble into an outermost layer of rodlet bundles on aerial cell surfaces, conferring cellular hydrophobicity that supports fungal growth, development and dispersal; whereas Class II form highly ordered films at water-air interfaces through intermolecular interactions but contribute nothing to the rodlet structure. Hah1 is a class I hydrophobin that is involved in aerial growth of mycelia, but does not play a role in pathogenesis. This is Class I hydrophobin 1 from Heterobasidion annosum (Root rot fungus).